A 757-amino-acid chain; its full sequence is Chloride anion exchanger (757 aa).

The Cytoplasmic segment spans residues 1–71 (MIEAIGNQYV…SWLPAYKIKE (71 aa)). The chain crosses the membrane as a helical span at residues 72–92 (WLLSDIVSGISTGLVAVLQGL). A topological domain (extracellular) is located at residue alanine 93. The helical transmembrane segment at 94–114 (FALLVNIPPAYGLYAAFFPVI) threads the bilayer. Residues 115–124 (TYFFLGTSRH) are Cytoplasmic-facing. The chain crosses the membrane as a helical span at residues 125 to 145 (ISVGPFPVLSMMVGVVVTRVV). The Extracellular portion of the chain corresponds to 146 to 176 (SDPNASSELSSSSTENDSFIEEKVMVAASVT). N-linked (GlcNAc...) asparagine glycosylation is found at asparagine 149 and asparagine 161. The helical transmembrane segment at 177-197 (VLSGIIQLLLGVLQVGFVVIY) threads the bilayer. Residues 198-201 (LSES) are Cytoplasmic-facing. A helical transmembrane segment spans residues 202-222 (LISGFTTAAAIHVLVSQLKFM). Over 223 to 250 (LQLPVPAYSDPFSIFKVLESVFTQIQKT) the chain is Extracellular. A helical membrane pass occupies residues 251–271 (NIADLVTSVIILVVVFVFKEI). Residues 272-278 (NQRYRSK) are Cytoplasmic-facing. Residues 279–299 (LPVPIPIELIMTVIATGVSYG) form a helical membrane-spanning segment. Residues 300 to 335 (CNFEDRFGVAVVGNMSLGFQPPITPSVEVFQDTIGD) are Extracellular-facing. The chain crosses the membrane as a helical span at residues 336–356 (SFGIAIVGFAVAFSVASVYSL). The Cytoplasmic segment spans residues 357–367 (KYDYPIDGNQE). Residues 368-388 (LIALGVSNIFTGAFKGFAGST) form a helical membrane-spanning segment. The Extracellular segment spans residues 389 to 404 (ALSRSGVQESTGGKTQ). Residues 405-425 (VAGLLSAVIVLIVIVAIGFLL) traverse the membrane as a helical segment. Over 426–462 (QPLQKSVLAALALGNLKGMLMQFAEIGRLWKKDKYDC) the chain is Cytoplasmic. A helical membrane pass occupies residues 463–483 (LIWIMTFIFAIVLGLGLGLAA). Over 484 to 757 (SVAFQLLTIV…ECQVPVETKF (274 aa)) the chain is Extracellular. The STAS domain occupies 518 to 713 (NYAEVYEPEG…LTIHDAILHI (196 aa)). Positions 754 to 757 (ETKF) match the PDZ-binding motif.

This sequence belongs to the SLC26A/SulP transporter (TC 2.A.53) family. As to quaternary structure, interacts with PDZK1. Interacts with CFTR, SLC26A6 and NHERF1. Interacts (via PDZ-binding motif) with NHERF4 (via the third PDZ domain). This interaction leads to decreased expression of SLC26A3 on the cell membrane resulting in its reduced exchanger activity. In terms of processing, N-glycosylation is required for efficient cell surface expression, and protection from proteolytic degradation. Expressed in spermatogenic cells. Expressed at high levels in cecum and colon and at lower levels in small intestine.

Its subcellular location is the apical cell membrane. It is found in the membrane. The protein resides in the cell membrane. The catalysed reaction is hydrogencarbonate(in) + 2 chloride(out) = hydrogencarbonate(out) + 2 chloride(in). In terms of biological role, mediates chloride-bicarbonate exchange with a chloride bicarbonate stoichiometry of 2:1 in the intestinal epithelia. Plays a role in the chloride and bicarbonate homeostasis during sperm epididymal maturation and capacitation. This chain is Chloride anion exchanger (Slc26a3), found in Mus musculus (Mouse).